The following is a 122-amino-acid chain: MARIAGVDLPNKKRIEYGLTYIYGIGLYKSRQILDAAGISYDKRVFELSEDEAAAIRKEIQEHHIVEGDLRKQVAMDIKALMDLGSYRGLRHRKGLPVRGQKTKTNARTRKGRRKTVGAATK.

Over residues Gly95–Thr116 the composition is skewed to basic residues. The disordered stretch occupies residues Gly95–Lys122.

This sequence belongs to the universal ribosomal protein uS13 family. Part of the 30S ribosomal subunit. Forms a loose heterodimer with protein S19. Forms two bridges to the 50S subunit in the 70S ribosome.

Located at the top of the head of the 30S subunit, it contacts several helices of the 16S rRNA. In the 70S ribosome it contacts the 23S rRNA (bridge B1a) and protein L5 of the 50S subunit (bridge B1b), connecting the 2 subunits; these bridges are implicated in subunit movement. Contacts the tRNAs in the A and P-sites. This chain is Small ribosomal subunit protein uS13, found in Campylobacter curvus (strain 525.92).